A 296-amino-acid polypeptide reads, in one-letter code: Putative fatty acid elongase DDB_G0272012 (296 aa).

7 helical membrane passes run 51 to 71 (FQIL…IKFL), 83 to 103 (VSIL…VGIL), 134 to 154 (WSYI…IIVL), 159 to 179 (LIFL…YFMY), 184 to 204 (LQLW…YFYF), 220 to 240 (MIQI…SAAI), and 253 to 273 (AFIS…QFFV). Low complexity predominate over residues 277–290 (SNKPTSSSSTTTPT). The disordered stretch occupies residues 277-296 (SNKPTSSSSTTTPTKTKKID).

The protein belongs to the ELO family.

Its subcellular location is the membrane. It catalyses the reaction a very-long-chain acyl-CoA + malonyl-CoA + H(+) = a very-long-chain 3-oxoacyl-CoA + CO2 + CoA. Functionally, could be implicated in synthesis of very long chain fatty acids. The sequence is that of Putative fatty acid elongase DDB_G0272012 from Dictyostelium discoideum (Social amoeba).